The following is a 91-amino-acid chain: MKKLFASLAIAAVVAPVWAATQTVTLSVPGMTCSACPITVKKAISKVEGVSKVNVTFETREAVVTFDDAKTSVQKLTKATEDAGYPSSVKK.

Positions 1-19 are cleaved as a signal peptide; that stretch reads MKKLFASLAIAAVVAPVWA. The region spanning 22 to 88 is the HMA domain; the sequence is QTVTLSVPGM…ATEDAGYPSS (67 aa). Cys33 and Cys36 together coordinate Hg(2+).

The protein belongs to the MerP family. As to quaternary structure, monomer.

The protein localises to the periplasm. Functionally, involved in mercury resistance. Acts as a mercury scavenger that specifically binds to a mercuric ion in the periplasm and probably passes it to the cytoplasmic mercuric reductase MerA via the mercuric transport protein MerT. The sequence is that of Mercuric transport protein periplasmic component from Serratia marcescens.